Here is a 513-residue protein sequence, read N- to C-terminus: uncharacterized protein (513 aa).

A CYTH domain is found at 11–219; that stretch reads HLEVERKFDV…SKLARVLGAT (209 aa). The CHAD domain occupies 228-506; it reads PQPPADPVHR…LEAALRKLDK (279 aa).

This is an uncharacterized protein from Mycobacterium tuberculosis (strain ATCC 25618 / H37Rv).